The chain runs to 271 residues: NADH-quinone oxidoreductase subunit B (271 aa).

[4Fe-4S] cluster contacts are provided by Cys-37, Cys-38, Cys-103, and Cys-132. The interval 227-271 is disordered; that stretch reads LAPPSVFGRAKRIPVDPKPSDEARAHGPGPTTESIGDVDGPDRGI. Residues 239–251 are compositionally biased toward basic and acidic residues; the sequence is IPVDPKPSDEARA.

The protein belongs to the complex I 20 kDa subunit family. As to quaternary structure, NDH-1 is composed of 14 different subunits. Subunits NuoB, C, D, E, F, and G constitute the peripheral sector of the complex. [4Fe-4S] cluster is required as a cofactor.

The protein resides in the cell membrane. The catalysed reaction is a quinone + NADH + 5 H(+)(in) = a quinol + NAD(+) + 4 H(+)(out). Its function is as follows. NDH-1 shuttles electrons from NADH, via FMN and iron-sulfur (Fe-S) centers, to quinones in the respiratory chain. The immediate electron acceptor for the enzyme in this species is believed to be a menaquinone. Couples the redox reaction to proton translocation (for every two electrons transferred, four hydrogen ions are translocated across the cytoplasmic membrane), and thus conserves the redox energy in a proton gradient. This Frankia casuarinae (strain DSM 45818 / CECT 9043 / HFP020203 / CcI3) protein is NADH-quinone oxidoreductase subunit B.